Consider the following 476-residue polypeptide: Bifunctional protein GlmU (476 aa).

The interval 1-235 is pyrophosphorylase; sequence MTALDIIIMA…ALQVAGVNSP (235 aa). Residues Lys-23, Gln-81, 86–87, 108–110, Gly-145, Glu-160, and Asn-233 each bind UDP-N-acetyl-alpha-D-glucosamine; these read GT and SGD. Asp-110 lines the Mg(2+) pocket. Asn-233 contributes to the Mg(2+) binding site. Residues 236–256 form a linker region; it reads AQLADLERAHQRAQAAALMEQ. The segment at 257 to 476 is N-acetyltransferase; the sequence is GVRLADPARF…WKRPAKQAKG (220 aa). The UDP-N-acetyl-alpha-D-glucosamine site is built by Arg-351 and Lys-369. The active-site Proton acceptor is His-381. Tyr-384 and Asn-395 together coordinate UDP-N-acetyl-alpha-D-glucosamine. Residues Ala-398, 404-405, Ser-423, Gly-441, and Arg-458 each bind acetyl-CoA; that span reads NY.

In the N-terminal section; belongs to the N-acetylglucosamine-1-phosphate uridyltransferase family. This sequence in the C-terminal section; belongs to the transferase hexapeptide repeat family. Homotrimer. Requires Mg(2+) as cofactor.

It localises to the cytoplasm. It catalyses the reaction alpha-D-glucosamine 1-phosphate + acetyl-CoA = N-acetyl-alpha-D-glucosamine 1-phosphate + CoA + H(+). It carries out the reaction N-acetyl-alpha-D-glucosamine 1-phosphate + UTP + H(+) = UDP-N-acetyl-alpha-D-glucosamine + diphosphate. It functions in the pathway nucleotide-sugar biosynthesis; UDP-N-acetyl-alpha-D-glucosamine biosynthesis; N-acetyl-alpha-D-glucosamine 1-phosphate from alpha-D-glucosamine 6-phosphate (route II): step 2/2. Its pathway is nucleotide-sugar biosynthesis; UDP-N-acetyl-alpha-D-glucosamine biosynthesis; UDP-N-acetyl-alpha-D-glucosamine from N-acetyl-alpha-D-glucosamine 1-phosphate: step 1/1. It participates in bacterial outer membrane biogenesis; LPS lipid A biosynthesis. Its function is as follows. Catalyzes the last two sequential reactions in the de novo biosynthetic pathway for UDP-N-acetylglucosamine (UDP-GlcNAc). The C-terminal domain catalyzes the transfer of acetyl group from acetyl coenzyme A to glucosamine-1-phosphate (GlcN-1-P) to produce N-acetylglucosamine-1-phosphate (GlcNAc-1-P), which is converted into UDP-GlcNAc by the transfer of uridine 5-monophosphate (from uridine 5-triphosphate), a reaction catalyzed by the N-terminal domain. The protein is Bifunctional protein GlmU of Acidovorax sp. (strain JS42).